A 244-amino-acid chain; its full sequence is Type I iodothyronine deiodinase (244 aa).

At 1–12 (MGLSQLGLWLRR) the chain is on the extracellular side. Residues 13–33 (LWVLFQVALQVAVGKVFLILF) form a helical; Signal-anchor for type III membrane protein membrane-spanning segment. Topologically, residues 34–244 (PSRVKQHIVA…VRAVLEKLHS (211 aa)) are cytoplasmic. Selenocysteine 121 is a catalytic residue. Residue selenocysteine 121 is a non-standard amino acid, selenocysteine.

It belongs to the iodothyronine deiodinase family. Predominantly monomer. Can form homodimers but homodimerization is not essential for enzyme activity.

It is found in the cell membrane. It localises to the endoplasmic reticulum membrane. The protein resides in the basolateral cell membrane. The catalysed reaction is 3,3',5-triiodo-L-thyronine + iodide + A + H(+) = L-thyroxine + AH2. The enzyme catalyses 3,3',5'-triiodo-L-thyronine + iodide + A + H(+) = L-thyroxine + AH2. It carries out the reaction 3,3'-diiodo-L-thyronine + iodide + A + H(+) = 3,3',5'-triiodo-L-thyronine + AH2. It catalyses the reaction 3,3'-diiodo-L-thyronine + iodide + A + H(+) = 3,3',5-triiodo-L-thyronine + AH2. The catalysed reaction is 3'-iodo-L-thyronine + iodide + A + H(+) = 3',5'-diiodo-L-thyronine + AH2. The enzyme catalyses 3-iodo-L-thyronine + iodide + A + H(+) = 3,5-diiodo-L-thyronine + AH2. It carries out the reaction 3-iodo-L-thyronine + iodide + A + H(+) = 3,3'-diiodo-L-thyronine + AH2. It catalyses the reaction 3,3'-diiodothyronamine + iodide + A + H(+) = 3,3',5'-triiodothyronamine + AH2. The catalysed reaction is 3'-iodothyronamine + iodide + A + H(+) = 3',5'-diiodothyronamine + AH2. The enzyme catalyses 3-iodothyronamine + iodide + A + H(+) = 3,3'-diiodothyronamine + AH2. It carries out the reaction 3,3'-diiodothyronamine + iodide + A + H(+) = 3,3',5-triiodothyronamine + AH2. It catalyses the reaction 3-iodothyronamine + iodide + A + H(+) = 3,5-diiodothyronamine + AH2. The catalysed reaction is 3,3'-diiodo-L-thyronine sulfate + iodide + A + H(+) = 3,3',5'-triiodo-L-thyronine sulfate + AH2. The enzyme catalyses 3,3',5'-triiodo-L-thyronine sulfate + iodide + A + H(+) = L-thyroxine sulfate + AH2. It carries out the reaction 3,3'-diiodo-L-thyronine sulfate + iodide + A + H(+) = 3,3',5-triiodo-L-thyronine sulfate + AH2. In terms of biological role, plays a crucial role in the metabolism of thyroid hormones (TH) and has specific roles in TH activation and inactivation by deiodination. Catalyzes the deiodination of L-thyroxine (T4) to 3,5,3'-triiodothyronine (T3) and 3',5'-diiodothyronine (3',5'-T2) to 3'-monoiodothyronine (3'-T1) via outer-ring deiodination (ORD). Catalyzes the deiodination of T4 to 3,3',5'-triiodothyronine (rT3), T3 to 3,3'-diiodothyronine (3,3'-T2), 3,5-diiodothyronine (3,5-T2) to 3-monoiodothyronine (3-T1) and 3,3'-T2 to 3-T1 via inner-ring deiodination (IRD). Catalyzes the deiodination of rT3 to 3,3'-T2 via ORD. Catalyzes the phenolic ring deiodinations of 3,3',5'-triiodothyronamine, 3',5'-diiodothyronamine and 3,3'-diiodothyronamine as well as tyrosyl ring deiodinations of 3,5,3'-triiodothyronamine and 3,5-diiodothyronamine. Catalyzes the deiodination of L-thyroxine sulfate and 3,3',5-triiodo-L-thyronine sulfate via IRD and of 3,3',5'-triiodo-L-thyronine sulfate via ORD. In Felis catus (Cat), this protein is Type I iodothyronine deiodinase (DIO1).